The following is a 257-amino-acid chain: MSLPNPFLIRPAPKKGKKGAPLVLLHDGGGTIFSYLQLGALGRDVYGIHNTRPGPTGVWEGGIAQMAAEYLDLIKTVVPSGPIIIGGWSLGGLVSFEMARQMAASAGSSSSSEQLQVLGLIMIDSRHPSTFTDKELVLPDSIKPAIRESIQHNMTQSRQLIRDYSTPSWPQGSQPPPTMFLRATRDLDGVPLPIQADAASSTRNGRMEGWREYEHDFIREVVEVEGTHFSIFEDQNIGELDKKLLAACKTLDRGVKS.

It belongs to the AMT4 thioesterase family.

Its pathway is antifungal biosynthesis. Its function is as follows. Thioesterase; part of the gene cluster that mediates the biosynthesis of the antifungal antibiotic FR901469, an inhibitor of beta-1,3-glucansynthase, exerting antifungal activity against the pathogenes Candida albicans and Aspergillus fumigatus. FR901469 is a cyclic depsipeptide containing 12 amino acid residues and a fatty acid chain. The NRPS frbI contains 12 modules responsible for the formation of the depsipeptide backbone which is denoted as Acyl-Thr-Ala-Tyr-Val-4OHPro-Thr-Thr-3OHPro-threo3OHGln-Gly-Thr-Orn-OH (C71H116N14O23). The PKS frbB is probably involved in the production of the hydrocarbon chain, and the acyl-CoA ligase frbC might be involved in the transport of the chain to the peptide ptoduct of frbI. Because FR901469 contains 3 hydroxylated amino acid residues, the 3 oxygenases frbA, frbH, and frbJ might be participating in amino acid hydroxylation. As no thioesterase domains were detected in frbI or frbB, the thioesterases frbD and frbE may instead release and cyclize the products of the NRPS and PKS, respectively. The protein is Thioesterase frbE of Dothideomycetidae sp. (strain 11243) (Fungal sp. (strain No.11243)).